Reading from the N-terminus, the 241-residue chain is Xyloglucan-specific endo-beta-1,4-glucanase 1 (241 aa).

An N-terminal signal peptide occupies residues 1 to 19 (MKGLLAGTIAAATFAVASA). Glu-136 is a catalytic residue. Residues Asn-174 and Asn-190 are each glycosylated (N-linked (GlcNAc...) asparagine). Glu-222 is a catalytic residue.

This sequence belongs to the glycosyl hydrolase 12 (cellulase H) family. Interacts with host apoplastic glucanase inhibitor GIP2.

The enzyme catalyses xyloglucan + H2O = xyloglucan oligosaccharides.. Its activity is regulated as follows. The xyloglucanase activity is inhibited by the binding of the host apoplastic glucanase inhibitor GIP2. In terms of biological role, glycoside hydrolase that exhibits xyloglucanase activity. Acts as an important virulence factor during P.parasitica infection of its host Nicotiana benthamiana. Also acts as a pathogen-associated molecular pattern (PAMP) in host species, where it can trigger defense responses including cell death. The PAMP activity is independent of its xyloglucanase activity. With paralog XLP1, is required to elevate apoplastic sugar during P.parasitica infection. The chain is Xyloglucan-specific endo-beta-1,4-glucanase 1 from Phytophthora nicotianae (strain INRA-310) (Phytophthora parasitica).